The following is a 685-amino-acid chain: Methionine--tRNA ligase (685 aa).

Positions 12 to 22 (PYANGSIHLGH) match the 'HIGH' region motif. Cysteine 143, cysteine 146, cysteine 156, and cysteine 159 together coordinate Zn(2+). The short motif at 339-343 (KMSKS) is the 'KMSKS' region element. Lysine 342 is an ATP binding site. The tRNA-binding domain occupies 582-685 (DFMKIDMRVA…TGAQPGDKVG (104 aa)).

It belongs to the class-I aminoacyl-tRNA synthetase family. MetG type 1 subfamily. In terms of assembly, homodimer. It depends on Zn(2+) as a cofactor.

It is found in the cytoplasm. It catalyses the reaction tRNA(Met) + L-methionine + ATP = L-methionyl-tRNA(Met) + AMP + diphosphate. Is required not only for elongation of protein synthesis but also for the initiation of all mRNA translation through initiator tRNA(fMet) aminoacylation. In Neisseria meningitidis serogroup B (strain ATCC BAA-335 / MC58), this protein is Methionine--tRNA ligase.